The following is a 147-amino-acid chain: NADH-ubiquinone oxidoreductase chain 3 (147 aa).

3 helical membrane passes run 6–26, 60–80, and 84–104; these read LFIL…LVFA, AICF…VGSL, and TFYS…GFVF.

The protein belongs to the complex I subunit 3 family.

It localises to the mitochondrion membrane. It catalyses the reaction a ubiquinone + NADH + 5 H(+)(in) = a ubiquinol + NAD(+) + 4 H(+)(out). In terms of biological role, core subunit of the mitochondrial membrane respiratory chain NADH dehydrogenase (Complex I) that is believed to belong to the minimal assembly required for catalysis. Complex I functions in the transfer of electrons from NADH to the respiratory chain. The immediate electron acceptor for the enzyme is believed to be ubiquinone. The protein is NADH-ubiquinone oxidoreductase chain 3 (ndh-3) of Neurospora crassa (strain ATCC 24698 / 74-OR23-1A / CBS 708.71 / DSM 1257 / FGSC 987).